We begin with the raw amino-acid sequence, 290 residues long: Pyridoxal kinase PdxY (290 aa).

Substrate contacts are provided by residues S12 and 47 to 48 (TQ). ATP-binding positions include D114, E151, K184, and 211 to 214 (RPLL). D225 is a binding site for substrate.

It belongs to the pyridoxine kinase family. PdxY subfamily. In terms of assembly, homodimer. Mg(2+) is required as a cofactor.

The enzyme catalyses pyridoxal + ATP = pyridoxal 5'-phosphate + ADP + H(+). Its pathway is cofactor metabolism; pyridoxal 5'-phosphate salvage; pyridoxal 5'-phosphate from pyridoxal: step 1/1. Its function is as follows. Pyridoxal kinase involved in the salvage pathway of pyridoxal 5'-phosphate (PLP). Catalyzes the phosphorylation of pyridoxal to PLP. The protein is Pyridoxal kinase PdxY of Pseudomonas fluorescens (strain Pf0-1).